The following is a 243-amino-acid chain: Nuclear ubiquitous casein and cyclin-dependent kinase substrate 1 (243 aa).

Residues 1–243 (MSRPVRNRKV…SEDDAQSGED (243 aa)) form a disordered region. Tyrosine 13 carries the phosphotyrosine modification. Residues serine 14 and serine 19 each carry the phosphoserine modification. Phosphotyrosine is present on tyrosine 26. A compositionally biased stretch (basic residues) spans 35-51 (KKIRSSPREAKNKRRSG). 6 positions are modified to phosphoserine: serine 54, serine 58, serine 61, serine 73, serine 75, and serine 79. A compositionally biased stretch (basic and acidic residues) spans 64 to 77 (KDVKTKKDDSHSAE). The segment covering 91–100 (QQRQAASKAA) has biased composition (low complexity). Residues 111 to 124 (VGSEEEQEEEDEAP) show a composition bias toward acidic residues. Phosphoserine is present on residues serine 113, serine 130, serine 132, and serine 144. Residues 132–145 (SDEDFLVEDDDDSD) show a composition bias toward acidic residues. The span at 149-174 (SKKKNKKMVKKSKPERKEKKMPKPRL) shows a compositional bias: basic residues. Residue threonine 179 is modified to Phosphothreonine. Serine 181 bears the Phosphoserine mark. Basic and acidic residues predominate over residues 197 to 206 (ASKEKTPSPK). Threonine 202 carries the post-translational modification Phosphothreonine. Residues serine 204, serine 214, serine 223, serine 229, serine 234, and serine 240 each carry the phosphoserine modification. The span at 232-243 (EGSEDDAQSGED) shows a compositional bias: acidic residues.

As to quaternary structure, does not interact with RAD51. Phosphorylated in an ATM-dependent manner in response to DNA damage. Phosphorylated by CDK1 and casein kinase.

The protein localises to the nucleus. It is found in the chromosome. Chromatin-associated protein involved in DNA repair by promoting homologous recombination (HR). Binds double-stranded DNA (dsDNA) and secondary DNA structures, such as D-loop structures, but with less affinity than RAD51AP1. The chain is Nuclear ubiquitous casein and cyclin-dependent kinase substrate 1 (NUCKS1) from Bos taurus (Bovine).